Consider the following 31-residue polypeptide: MTVAIDYFLLVGFCFAVTSGLWIGLKSIKLI.

The helical transmembrane segment at 3-23 threads the bilayer; it reads VAIDYFLLVGFCFAVTSGLWI.

The protein belongs to the PetL family. In terms of assembly, the 4 large subunits of the cytochrome b6-f complex are cytochrome b6, subunit IV (17 kDa polypeptide, PetD), cytochrome f and the Rieske protein, while the 4 small subunits are PetG, PetL, PetM and PetN. The complex functions as a dimer.

The protein resides in the plastid. It localises to the chloroplast thylakoid membrane. In terms of biological role, component of the cytochrome b6-f complex, which mediates electron transfer between photosystem II (PSII) and photosystem I (PSI), cyclic electron flow around PSI, and state transitions. PetL is important for photoautotrophic growth as well as for electron transfer efficiency and stability of the cytochrome b6-f complex. This is Cytochrome b6-f complex subunit 6 from Phaeodactylum tricornutum (strain CCAP 1055/1).